Reading from the N-terminus, the 340-residue chain is Protein phosphatase PTC7 homolog fig (340 aa).

In terms of domain architecture, PPM-type phosphatase spans 58–314 (RAQAETIQAP…DDITVVLASV (257 aa)). 3 residues coordinate Mn(2+): Asp90, Gly91, and Asp236.

The protein belongs to the PP2C family. Mg(2+) serves as cofactor. Requires Mn(2+) as cofactor.

The catalysed reaction is O-phospho-L-seryl-[protein] + H2O = L-seryl-[protein] + phosphate. It catalyses the reaction O-phospho-L-threonyl-[protein] + H2O = L-threonyl-[protein] + phosphate. This Drosophila pseudoobscura pseudoobscura (Fruit fly) protein is Protein phosphatase PTC7 homolog fig.